The primary structure comprises 1196 residues: Phosphoglucan, water dikinase, chloroplastic (1196 aa).

Residues 1-54 (MESIGSHCCSSPFTFITRNSSSSLPRLVNITHRVNLSHQSHRLRNSNSRLTCTA) constitute a chloroplast transit peptide. The residue at position 55 (threonine 55) is an N-acetylthreonine. Positions 66 to 166 (KKDGSGTKVR…NFSVVCHWDA (101 aa)) constitute a CBM20 domain. Residues 174–200 (PQEVGNDDDVGDGGHERDNHDVGDDRV) are disordered. A compositionally biased stretch (basic and acidic residues) spans 185–200 (DGGHERDNHDVGDDRV). Histidine 759 functions as the Tele-phosphohistidine intermediate in the catalytic mechanism. Residues 804–855 (LSTEGRSRTSKSSATKKTDKNSLSKKKTDKKSLSIDDEESKPGSSSSNSLLY) form a disordered region.

The protein belongs to the PEP-utilizing enzyme family. Homodimer. The cofactor is Mg(2+). In all starch containing tissues (e.g. roots, leaves, stems, inflorescence and siliques).

The protein resides in the plastid. The protein localises to the chloroplast. It catalyses the reaction [(1-&gt;4)-6-phospho-alpha-D-glucosyl](n) + n ATP + n H2O = [(1-&gt;4)-3,6-bisphospho-alpha-D-glucosyl](n) + n AMP + n phosphate + 2n H(+). Functionally, mediates the incorporation of phosphate into starch-like phospho-alpha-glucan, mostly at the C-3 position of glucose units. Required for starch degradation, suggesting that the phosphate content of starch regulates its degradability. The sequence is that of Phosphoglucan, water dikinase, chloroplastic (GWD3) from Arabidopsis thaliana (Mouse-ear cress).